A 529-amino-acid polypeptide reads, in one-letter code: MGHRHSKSKSSDPPPSSSSSSSGNVVHHVKPAGERRGSSGSGTVGSSGSGTGGSRSTTSTQQNGRILGRPMEEVRRTYEFGRELGRGQFGVTYLVTHKETKQQVACKSIPTRRLVHKDDIEDVRREVQIMHHLSGHRNIVDLKGAYEDRHSVNLIMELCEGGELFDRIISKGLYSERAAADLCRQMVMVVHSCHSMGVMHRDLKPENFLFLSKDENSPLKATDFGLSVFFKPGDKFKDLVGSAYYVAPEVLKRNYGPEADIWSAGVILYILLSGVPPFWGENETGIFDAILQGQLDFSADPWPALSDGAKDLVRKMLKYDPKDRLTAAEVLNHPWIREDGEASDKPLDNAVLSRMKQFRAMNKLKKMALKVIAENLSEEEIIGLKEMFKSLDTDNNGIVTLEELRTGLPKLGSKISEAEIRQLMEAADMDGDGSIDYLEFISATMHMNRIEREDHLYTAFQFFDNDNSGYITMEELELAMKKYNMGDDKSIKEIIAEVDTDRDGKINYEEFVAMMKKGNPELVPNRRRM.

The tract at residues 1–73 (MGHRHSKSKS…GRILGRPMEE (73 aa)) is disordered. Gly-2 carries the N-myristoyl glycine lipid modification. Residues 39-53 (SGSGTVGSSGSGTGG) are compositionally biased toward gly residues. The region spanning 78 to 336 (YEFGRELGRG…AAEVLNHPWI (259 aa)) is the Protein kinase domain. ATP contacts are provided by residues 84–92 (LGRGQFGVT) and Lys-107. Asp-202 serves as the catalytic Proton acceptor. Ser-242 carries the post-translational modification Phosphoserine. The tract at residues 342–372 (ASDKPLDNAVLSRMKQFRAMNKLKKMALKVI) is autoinhibitory domain. 4 EF-hand domains span residues 379–414 (EEII…LGSK), 415–450 (ISEA…MNRI), 451–485 (ERED…KYNM), and 486–521 (GDDK…GNPE). Ca(2+) is bound by residues Asp-392, Asp-394, Asn-396, Glu-403, Asp-428, Asp-430, Asp-432, Ser-434, Glu-439, Asp-464, Asp-466, Ser-468, Tyr-470, Glu-475, Asp-499, Asp-501, Asp-503, Lys-505, and Glu-510.

Belongs to the protein kinase superfamily. Ser/Thr protein kinase family. CDPK subfamily. As to quaternary structure, interacts with GHR1. Expressed in both guard cells and mesophyll cells.

The protein resides in the cytoplasm. It localises to the nucleus. The catalysed reaction is L-seryl-[protein] + ATP = O-phospho-L-seryl-[protein] + ADP + H(+). It carries out the reaction L-threonyl-[protein] + ATP = O-phospho-L-threonyl-[protein] + ADP + H(+). Activated by calcium. Autophosphorylation may play an important role in the regulation of the kinase activity. May play a role in signal transduction pathways that involve calcium as a second messenger. Functions in abscisic acid (ABA) regulation of guard cell S-type anion- and Ca(2+)-permeable channels and stomatal closure. The chain is Calcium-dependent protein kinase 3 from Arabidopsis thaliana (Mouse-ear cress).